Consider the following 2340-residue polypeptide: Proto-oncogene tyrosine-protein kinase ROS (2340 aa).

Residues 1–28 (MKNICWLTLKLVKFVVLGCIIWISVAQS) form the signal peptide. Residues 29 to 1854 (TVLSSCLTSC…EDGVWITETS (1826 aa)) are Extracellular-facing. Asparagine 53 carries N-linked (GlcNAc...) asparagine glycosylation. 2 consecutive Fibronectin type-III domains span residues 111-206 (LPTA…VPET) and 207-295 (APLI…PSPS). N-linked (GlcNAc...) asparagine glycosylation is found at asparagine 334 and asparagine 362. One can recognise a Fibronectin type-III 3 domain in the interval 567–667 (LPGHPQEVSV…APSVGTTLVP (101 aa)). Asparagine 935 and asparagine 1011 each carry an N-linked (GlcNAc...) asparagine glycan. 2 consecutive Fibronectin type-III domains span residues 943–1038 (IPDP…SVPS) and 1039–1146 (APEN…TSEI). N-linked (GlcNAc...) asparagine glycosylation is present at asparagine 1243. Fibronectin type-III domains are found at residues 1442 to 1549 (ASDM…TKSG), 1550 to 1649 (VPGA…VNMF), 1651 to 1744 (TPEK…TKAG), and 1745 to 1846 (VPSK…LVED). N-linked (GlcNAc...) asparagine glycosylation occurs at asparagine 1676. The chain crosses the membrane as a helical span at residues 1855-1875 (FILTIIVGIFLVATVPLTFVW). At 1876-2340 (HRSLKSHKAS…AHSEHGDVSE (465 aa)) the chain is on the cytoplasmic side. Positions 1938–2216 (LSLRLLLGSG…QLQLFRNVFL (279 aa)) constitute a Protein kinase domain. ATP is bound by residues 1944–1952 (LGSGAFGEV) and lysine 1973. The active-site Proton acceptor is aspartate 2072. Phosphotyrosine; by autocatalysis is present on residues tyrosine 2267 and tyrosine 2327.

The protein belongs to the protein kinase superfamily. Tyr protein kinase family. Insulin receptor subfamily. As to quaternary structure, interacts with PTPN11; may activate the PI3 kinase-mTOR signaling pathway. Interacts with VAV3; constitutive interaction mediating VAV3 phosphorylation. Interacts with PTPN6 (via SH2 1 domain); the interaction is direct and promotes ROS1 dephosphorylation. Post-translationally, phosphorylated. Probably autophosphorylates. Phosphorylation at Tyr-2267 and/or Tyr-2327 recruits PTPN11. Phosphorylation at Tyr-2267 is required for the interaction with PTPN6 that mediates ROS1 dephosphorylation. Phosphorylation at Tyr-2267 stimulates the kinase activity and the activation of the ERK1 signaling cascade. In terms of tissue distribution, expressed by epithelial cells of the caput epididymis (at protein level).

It localises to the cell membrane. The catalysed reaction is L-tyrosyl-[protein] + ATP = O-phospho-L-tyrosyl-[protein] + ADP + H(+). Its activity is regulated as follows. Inhibited by dephosphorylation by PTPN6. Its function is as follows. Receptor tyrosine kinase (RTK) that plays a role in epithelial cell differentiation and regionalization of the proximal epididymal epithelium. NELL2 is an endogenous ligand for ROS1. Upon endogenous stimulation by NELL2, ROS1 activates the intracellular signaling pathway and triggers epididymal epithelial differentiation and subsequent sperm maturation. May activate several downstream signaling pathways related to cell differentiation, proliferation, growth and survival including the PI3 kinase-mTOR signaling pathway. Mediates the phosphorylation of PTPN11, an activator of this pathway. May also phosphorylate and activate the transcription factor STAT3 to control anchorage-independent cell growth. Mediates the phosphorylation and the activation of VAV3, a guanine nucleotide exchange factor regulating cell morphology. May activate other downstream signaling proteins including AKT1, MAPK1, MAPK3, IRS1, and PLCG2. The polypeptide is Proto-oncogene tyrosine-protein kinase ROS (Ros1) (Mus musculus (Mouse)).